Here is a 635-residue protein sequence, read N- to C-terminus: DNA mismatch repair protein MutL (635 aa).

The segment at 359 to 399 (GTNKYAQPEAAKSSAAEQAVARERSSARERAAPAYKEDHPY) is disordered. Low complexity predominate over residues 364–377 (AQPEAAKSSAAEQA). The span at 378 to 399 (VARERSSARERAAPAYKEDHPY) shows a compositional bias: basic and acidic residues.

The protein belongs to the DNA mismatch repair MutL/HexB family.

In terms of biological role, this protein is involved in the repair of mismatches in DNA. It is required for dam-dependent methyl-directed DNA mismatch repair. May act as a 'molecular matchmaker', a protein that promotes the formation of a stable complex between two or more DNA-binding proteins in an ATP-dependent manner without itself being part of a final effector complex. The protein is DNA mismatch repair protein MutL of Yersinia pseudotuberculosis serotype O:1b (strain IP 31758).